Here is a 275-residue protein sequence, read N- to C-terminus: MVRKIAIYGKGGIGKSTTTQNTVAAMAHFHDKKVFIHGCDPKADSTRLILHGKQQVTMMDTLREKGEDECTPDKVIEVGFGGVKCVESGGPEPGVGCAGRGVITAITLMEQHGVYEDDLDFVFFDVLGDVVCGGFAMPVRDGKADEIYVVASGEMMALYAANNICKGMVKYAEQSGVRLGGIICNSRNVDGELDLLQEFCDKIGTQLIHFVPRDNIVQKAEFQKKAVVDYDDTCNQALEYKELARKIIENENLVIPTPMTMDELEELTSKYGFLD.

9 to 16 is a binding site for ATP; the sequence is GKGGIGKS. Position 97 (Cys-97) interacts with [4Fe-4S] cluster. At Arg-100 the chain carries ADP-ribosylarginine; by dinitrogenase reductase ADP-ribosyltransferase. [4Fe-4S] cluster is bound at residue Cys-132.

This sequence belongs to the NifH/BchL/ChlL family. As to quaternary structure, homodimer. It depends on [4Fe-4S] cluster as a cofactor. In terms of processing, the reversible ADP-ribosylation of Arg-100 inactivates the nitrogenase reductase and regulates nitrogenase activity.

The enzyme catalyses N2 + 8 reduced [2Fe-2S]-[ferredoxin] + 16 ATP + 16 H2O = H2 + 8 oxidized [2Fe-2S]-[ferredoxin] + 2 NH4(+) + 16 ADP + 16 phosphate + 6 H(+). Its function is as follows. The key enzymatic reactions in nitrogen fixation are catalyzed by the nitrogenase complex, which has 2 components: the iron protein and the molybdenum-iron protein. This chain is Nitrogenase iron protein (nifH), found in Methanococcus maripaludis (Methanococcus deltae).